The chain runs to 179 residues: MARLQEFYKEKVVGDLTAKFAYKSAMEVPRILKITLNMGLSEAIADKKIIEHAVGDLTKIAGQKPVVTKARKAIAGFKIREGYPIGCMVTLRGAQMYEFLDRFITVALPRVRDFRGISGKAFDGRGNYNIGVKEQIIFPEIEYDKIDALRGMNISITTTAKTDDEAKALLAAFKFPFRN.

The protein belongs to the universal ribosomal protein uL5 family. Part of the 50S ribosomal subunit; part of the 5S rRNA/L5/L18/L25 subcomplex. Contacts the 5S rRNA and the P site tRNA. Forms a bridge to the 30S subunit in the 70S ribosome.

Functionally, this is one of the proteins that bind and probably mediate the attachment of the 5S RNA into the large ribosomal subunit, where it forms part of the central protuberance. In the 70S ribosome it contacts protein S13 of the 30S subunit (bridge B1b), connecting the 2 subunits; this bridge is implicated in subunit movement. Contacts the P site tRNA; the 5S rRNA and some of its associated proteins might help stabilize positioning of ribosome-bound tRNAs. The chain is Large ribosomal subunit protein uL5 from Herminiimonas arsenicoxydans.